A 474-amino-acid polypeptide reads, in one-letter code: ATP synthase subunit beta 2 (474 aa).

Residue 156-163 coordinates ATP; the sequence is GGAGVGKT.

The protein belongs to the ATPase alpha/beta chains family. F-type ATPases have 2 components, CF(1) - the catalytic core - and CF(0) - the membrane proton channel. CF(1) has five subunits: alpha(3), beta(3), gamma(1), delta(1), epsilon(1). CF(0) has three main subunits: a(1), b(2) and c(9-12). The alpha and beta chains form an alternating ring which encloses part of the gamma chain. CF(1) is attached to CF(0) by a central stalk formed by the gamma and epsilon chains, while a peripheral stalk is formed by the delta and b chains.

The protein resides in the cell inner membrane. The enzyme catalyses ATP + H2O + 4 H(+)(in) = ADP + phosphate + 5 H(+)(out). Its function is as follows. Produces ATP from ADP in the presence of a proton gradient across the membrane. The catalytic sites are hosted primarily by the beta subunits. This Shewanella frigidimarina (strain NCIMB 400) protein is ATP synthase subunit beta 2.